The primary structure comprises 377 residues: N-acetylgalactosamine-6-phosphate deacetylase (377 aa).

Residue Glu-125 coordinates a divalent metal cation. Ala-136–His-137 is a binding site for substrate. A divalent metal cation-binding residues include His-191 and His-212. Substrate contacts are provided by residues Asn-215–Gly-216, Arg-223, and Asp-244–His-247. Catalysis depends on Asp-269, which acts as the Proton donor/acceptor. Leu-302 to Gly-304 provides a ligand contact to substrate.

Belongs to the metallo-dependent hydrolases superfamily. NagA family. It depends on a divalent metal cation as a cofactor.

It catalyses the reaction N-acetyl-D-galactosamine 6-phosphate + H2O = D-galactosamine 6-phosphate + acetate. Functionally, catalyzes the deacetylation of N-acetyl-D-galactosamine 6-phosphate to D-galactosamine 6-phosphate. Can probably also catalyze the deacetylation of N-acetyl-D-glucosamine 6-phosphate to D-glucosamine 6-phosphate. In Escherichia coli O157:H7, this protein is N-acetylgalactosamine-6-phosphate deacetylase (agaA).